Reading from the N-terminus, the 94-residue chain is Integration host factor subunit beta (94 aa).

It belongs to the bacterial histone-like protein family. As to quaternary structure, heterodimer of an alpha and a beta chain.

In terms of biological role, this protein is one of the two subunits of integration host factor, a specific DNA-binding protein that functions in genetic recombination as well as in transcriptional and translational control. The sequence is that of Integration host factor subunit beta from Brucella melitensis biotype 2 (strain ATCC 23457).